Consider the following 141-residue polypeptide: Galactose-6-phosphate isomerase subunit LacA (141 aa).

The protein belongs to the LacAB/RpiB family. As to quaternary structure, heteromultimeric protein consisting of LacA and LacB.

The catalysed reaction is aldehydo-D-galactose 6-phosphate = keto-D-tagatose 6-phosphate. The protein operates within carbohydrate metabolism; D-galactose 6-phosphate degradation; D-tagatose 6-phosphate from D-galactose 6-phosphate: step 1/1. This chain is Galactose-6-phosphate isomerase subunit LacA, found in Streptococcus pneumoniae (strain P1031).